A 595-amino-acid chain; its full sequence is MFS-type transporter phomT (595 aa).

Positions Met-1 to Lys-11 are enriched in basic and acidic residues. Residues Met-1–Asp-62 are disordered. A compositionally biased stretch (polar residues) spans Pro-30 to Val-48. N-linked (GlcNAc...) asparagine glycans are attached at residues Asn-39 and Asn-44. A run of 3 helical transmembrane segments spans residues Ile-91–Ala-111, Asp-126–Gly-146, and Trp-156–Pro-176. Asn-177 carries an N-linked (GlcNAc...) asparagine glycan. The next 3 helical transmembrane spans lie at Ala-186–Ser-206, Ala-217–Phe-237, and Trp-245–Leu-265. A glycan (N-linked (GlcNAc...) asparagine) is linked at Asn-277. 7 helical membrane passes run Ile-290–Gly-310, Val-320–Trp-340, Val-362–Phe-382, Ile-409–Pro-429, Trp-451–Val-471, Ala-483–Val-503, and Val-559–Phe-579.

The protein belongs to the major facilitator superfamily. TCR/Tet family.

It localises to the cell membrane. MFS-type transporter; part of the gene cluster that mediates the biosynthesis of the phomopsins, a group of hexapeptide mycotoxins which infects lupins and causes lupinosis disease in livestock. PhomT is likely to be involved in the cellular export of phomopsins. The polypeptide is MFS-type transporter phomT (Diaporthe leptostromiformis (Lupinosis disease fungus)).